Reading from the N-terminus, the 541-residue chain is Chaperonin GroEL (541 aa).

ATP contacts are provided by residues Thr-29–Pro-32, Asp-86–Thr-90, Gly-413, Asp-477–Leu-479, and Asp-493.

Belongs to the chaperonin (HSP60) family. Forms a cylinder of 14 subunits composed of two heptameric rings stacked back-to-back. Interacts with the co-chaperonin GroES.

The protein localises to the cytoplasm. It carries out the reaction ATP + H2O + a folded polypeptide = ADP + phosphate + an unfolded polypeptide.. Together with its co-chaperonin GroES, plays an essential role in assisting protein folding. The GroEL-GroES system forms a nano-cage that allows encapsulation of the non-native substrate proteins and provides a physical environment optimized to promote and accelerate protein folding. This Clostridium beijerinckii (strain ATCC 51743 / NCIMB 8052) (Clostridium acetobutylicum) protein is Chaperonin GroEL.